Consider the following 567-residue polypeptide: MEGSPIPVLTVPTAPYEDQRPTGGGGLRRPTGLFEGQRNYLPNFIQSVLSSIDLRDRQGCTMVVGSDGRYFSRTATEIVVQMAAANGIGRLIIGQNGILSTPAVSCIIRKIKAAGGIILTASHCPGGPGGEFGVKFNVANGGPAPDVVSDKIYQISKTIEEYAICPDLRIDLSRLGRQEFDLENKFKPFRVEIVDPVDIYLNLLRNIFDFNAIKSLLTGPSQLKIRVDAMHGVMGPYVRKVLCDELGAPANSAINCVPLEDFGGQHPDPNLTYATTLLEAMKGGEYGFGAAFDADGDRYMILGQNGFFVSPSDSLAIIAANLSCIPYFRQMGVRGFGRSMPTSTALDRVAKSMKVPVYETPAGWRFFSNLMDSGRCSLCGEESFGTGSDHLREKDGLWAVLVWLSIIAARKQSVEEIVRDHWAKYGRHYYCRFDYEGLEPKATYYIMRDLEALVTDKSFIGQQFAVGSHIYSIAKTDSFEYVDPVDGTVTKKQGLRIIFSDASRLIFRLSSSSGVRATIRLYAESYERDPSGHDQEPQAVLSPLIAIALKISQIHERTGRRGPTVIT.

The tract at residues 1–26 (MEGSPIPVLTVPTAPYEDQRPTGGGG) is disordered. Threonine 120 carries the post-translational modification Phosphothreonine. Serine 122 bears the Phosphoserine mark.

The protein belongs to the phosphohexose mutase family. As to quaternary structure, interacts with DMD/dystrophin; the interaction is direct. Interacts with UTRN/utrophin.

The protein localises to the cell junction. Its subcellular location is the adherens junction. The protein resides in the cytoplasm. It is found in the cytoskeleton. It localises to the cell membrane. The protein localises to the sarcolemma. Functionally, component of adherens-type cell-cell and cell-matrix junctions. Has no phosphoglucomutase activity in vitro. The sequence is that of Phosphoglucomutase-like protein 5 from Mus musculus (Mouse).